We begin with the raw amino-acid sequence, 357 residues long: Histidinol-phosphate aminotransferase (357 aa).

Lys218 carries the post-translational modification N6-(pyridoxal phosphate)lysine.

This sequence belongs to the class-II pyridoxal-phosphate-dependent aminotransferase family. Histidinol-phosphate aminotransferase subfamily. Homodimer. Pyridoxal 5'-phosphate is required as a cofactor.

It catalyses the reaction L-histidinol phosphate + 2-oxoglutarate = 3-(imidazol-4-yl)-2-oxopropyl phosphate + L-glutamate. Its pathway is amino-acid biosynthesis; L-histidine biosynthesis; L-histidine from 5-phospho-alpha-D-ribose 1-diphosphate: step 7/9. The sequence is that of Histidinol-phosphate aminotransferase from Prosthecochloris aestuarii (strain DSM 271 / SK 413).